The primary structure comprises 236 residues: Phosphoribosylaminoimidazole-succinocarboxamide synthase (236 aa).

Belongs to the SAICAR synthetase family.

The enzyme catalyses 5-amino-1-(5-phospho-D-ribosyl)imidazole-4-carboxylate + L-aspartate + ATP = (2S)-2-[5-amino-1-(5-phospho-beta-D-ribosyl)imidazole-4-carboxamido]succinate + ADP + phosphate + 2 H(+). It participates in purine metabolism; IMP biosynthesis via de novo pathway; 5-amino-1-(5-phospho-D-ribosyl)imidazole-4-carboxamide from 5-amino-1-(5-phospho-D-ribosyl)imidazole-4-carboxylate: step 1/2. The polypeptide is Phosphoribosylaminoimidazole-succinocarboxamide synthase (Cellvibrio japonicus (strain Ueda107) (Pseudomonas fluorescens subsp. cellulosa)).